A 472-amino-acid polypeptide reads, in one-letter code: Uronate isomerase (472 aa).

The protein belongs to the metallo-dependent hydrolases superfamily. Uronate isomerase family.

The catalysed reaction is D-glucuronate = D-fructuronate. The enzyme catalyses aldehydo-D-galacturonate = keto-D-tagaturonate. It participates in carbohydrate metabolism; pentose and glucuronate interconversion. This Oceanobacillus iheyensis (strain DSM 14371 / CIP 107618 / JCM 11309 / KCTC 3954 / HTE831) protein is Uronate isomerase.